Consider the following 90-residue polypeptide: Cell division topological specificity factor (90 aa).

This sequence belongs to the MinE family.

Its function is as follows. Prevents the cell division inhibition by proteins MinC and MinD at internal division sites while permitting inhibition at polar sites. This ensures cell division at the proper site by restricting the formation of a division septum at the midpoint of the long axis of the cell. The protein is Cell division topological specificity factor of Francisella philomiragia subsp. philomiragia (strain ATCC 25017 / CCUG 19701 / FSC 153 / O#319-036).